A 294-amino-acid chain; its full sequence is Shikimate dehydrogenase (NADP(+)) (294 aa).

Shikimate is bound by residues 23-25 and T76; that span reads SRS. K80 serves as the catalytic Proton acceptor. Residues N101 and D116 each contribute to the shikimate site. Residues 141 to 145 and M233 contribute to the NADP(+) site; that span reads GAGGA. Y235 is a shikimate binding site. G256 is a binding site for NADP(+).

Belongs to the shikimate dehydrogenase family. In terms of assembly, homodimer.

The enzyme catalyses shikimate + NADP(+) = 3-dehydroshikimate + NADPH + H(+). It participates in metabolic intermediate biosynthesis; chorismate biosynthesis; chorismate from D-erythrose 4-phosphate and phosphoenolpyruvate: step 4/7. In terms of biological role, involved in the biosynthesis of the chorismate, which leads to the biosynthesis of aromatic amino acids. Catalyzes the reversible NADPH linked reduction of 3-dehydroshikimate (DHSA) to yield shikimate (SA). The sequence is that of Shikimate dehydrogenase (NADP(+)) from Methylibium petroleiphilum (strain ATCC BAA-1232 / LMG 22953 / PM1).